The sequence spans 147 residues: Small ribosomal subunit protein uS5 (147 aa).

The region spanning 9–72 is the S5 DRBM domain; that stretch reads FEEVIVDIGR…DDAFKNIIHV (64 aa).

Belongs to the universal ribosomal protein uS5 family. In terms of assembly, part of the 30S ribosomal subunit. Contacts proteins S4 and S8.

Its function is as follows. With S4 and S12 plays an important role in translational accuracy. Located at the back of the 30S subunit body where it stabilizes the conformation of the head with respect to the body. The polypeptide is Small ribosomal subunit protein uS5 (Campylobacter concisus (strain 13826)).